We begin with the raw amino-acid sequence, 249 residues long: Coproheme decarboxylase (249 aa).

Fe-coproporphyrin III-binding positions include arginine 131, 145-149 (YPMDK), histidine 172, and glutamine 185. The active site involves tyrosine 145.

The protein belongs to the ChdC family. Type 1 subfamily. Fe-coproporphyrin III is required as a cofactor.

The catalysed reaction is Fe-coproporphyrin III + 2 H2O2 + 2 H(+) = heme b + 2 CO2 + 4 H2O. The enzyme catalyses Fe-coproporphyrin III + H2O2 + H(+) = harderoheme III + CO2 + 2 H2O. It carries out the reaction harderoheme III + H2O2 + H(+) = heme b + CO2 + 2 H2O. It participates in porphyrin-containing compound metabolism; protoheme biosynthesis. Its function is as follows. Involved in coproporphyrin-dependent heme b biosynthesis. Catalyzes the decarboxylation of Fe-coproporphyrin III (coproheme) to heme b (protoheme IX), the last step of the pathway. The reaction occurs in a stepwise manner with a three-propionate intermediate. This Staphylococcus saprophyticus subsp. saprophyticus (strain ATCC 15305 / DSM 20229 / NCIMB 8711 / NCTC 7292 / S-41) protein is Coproheme decarboxylase.